The primary structure comprises 1069 residues: ISWI chromatin-remodeling complex ATPase CHR17 (1069 aa).

The segment covering 1–10 (MARASKREVS) has biased composition (basic and acidic residues). Disordered stretches follow at residues 1 to 93 (MARA…KEMQ) and 136 to 168 (FAKSDPSPSQKKGKGRGRHSSKLTEEEEDEECL). Acidic residues-rich tracts occupy residues 15–37 (YSSEEEEQVNDQANVEEDDDELE) and 45–78 (SDEEDVAPDEAPVSDDEVVPVEDDAEEDEEDEEK). The segment covering 79–93 (AEISKREKARLKEMQ) has biased composition (basic and acidic residues). A compositionally biased stretch (basic residues) spans 146–156 (KKGKGRGRHSS). Residues 206–371 (IRLYENGING…WALLNFLLPE (166 aa)) enclose the Helicase ATP-binding domain. 219–226 (DEMGLGKT) provides a ligand contact to ATP. The DEAH box motif lies at 322–325 (DEAH). Residues 499-650 (LLDKLLPKLK…ALVIQQGRLA (152 aa)) enclose the Helicase C-terminal domain. SANT domains are found at residues 845–897 (EGFS…VRYK) and 946–1007 (QNKG…DTLI). Positions 1016–1069 (EFDERERQARKEKKLSKSATPSKRPSGRQANESPSSLLKKRKQLSMDDYGKRRK) are disordered. Over residues 1032 to 1051 (KSATPSKRPSGRQANESPSS) the composition is skewed to polar residues. A compositionally biased stretch (basic and acidic residues) spans 1059-1069 (LSMDDYGKRRK).

This sequence belongs to the SNF2/RAD54 helicase family. ISWI subfamily. Interacts with RLT1. Binds to FGT1. As to expression, highly expressed in growing tissues such as inflorescence and flower meristems, young leaves and floral organs. Expressed in roots, rosette and cauline leaves, stems, flowers, inflorescences and siliques.

It is found in the nucleus. In terms of biological role, possesses intrinsic ATP-dependent nucleosome-remodeling activity. Constitutes the catalytic subunit of several complexes capable of forming ordered nucleosome arrays on chromatin. Involved in the formation of nucleosome distribution patterns. Required for the maintenance of the plant vegetative phase. In association with RLT1 or RLT2 may prevent the early activation of the vegetative-to-reproductive transition by regulating key genes that contribute to flower timing, such as FT, SEP1, SEP3, AGL8/FUL, SOC1 and FLC. Necessary to acquire heat stress (HS) memory. This is ISWI chromatin-remodeling complex ATPase CHR17 from Arabidopsis thaliana (Mouse-ear cress).